Consider the following 338-residue polypeptide: ATPase GET3 (338 aa).

33 to 40 (KGGVGKTT) lines the ATP pocket. D62 is an active-site residue. E242 and N269 together coordinate ATP. Residues C280 and C283 each coordinate Zn(2+).

Belongs to the arsA ATPase family. As to quaternary structure, homodimer.

Its subcellular location is the cytoplasm. It is found in the endoplasmic reticulum. ATPase required for the post-translational delivery of tail-anchored (TA) proteins to the endoplasmic reticulum. Recognizes and selectively binds the transmembrane domain of TA proteins in the cytosol. This complex then targets to the endoplasmic reticulum by membrane-bound receptors, where the tail-anchored protein is released for insertion. This process is regulated by ATP binding and hydrolysis. ATP binding drives the homodimer towards the closed dimer state, facilitating recognition of newly synthesized TA membrane proteins. ATP hydrolysis is required for insertion. Subsequently, the homodimer reverts towards the open dimer state, lowering its affinity for the membrane-bound receptor, and returning it to the cytosol to initiate a new round of targeting. This Uncinocarpus reesii (strain UAMH 1704) protein is ATPase GET3.